Reading from the N-terminus, the 131-residue chain is RutC family protein YjgH (131 aa).

It belongs to the RutC family.

This Escherichia coli (strain K12) protein is RutC family protein YjgH (yjgH).